A 237-amino-acid chain; its full sequence is E3 ubiquitin-protein ligase RNF166 (237 aa).

The RING-type zinc finger occupies 33–73 (CPICLEVYHRPVAIGSCGHTFCGECLQPCLQVPSPLCPLCR). Zn(2+) contacts are provided by Cys98, Cys101, His113, and Cys117. The C2HC RNF-type zinc finger occupies 98–117 (CRGCNKKVTLAKMRVHISSC). One can recognise a UIM domain in the interval 221–237 (DEEAAFQAALALSLSEN).

The protein resides in the cytoplasm. It carries out the reaction S-ubiquitinyl-[E2 ubiquitin-conjugating enzyme]-L-cysteine + [acceptor protein]-L-lysine = [E2 ubiquitin-conjugating enzyme]-L-cysteine + N(6)-ubiquitinyl-[acceptor protein]-L-lysine.. Its pathway is protein modification; protein ubiquitination. E3 ubiquitin-protein ligase that promotes the ubiquitination of different substrates. In turn, participates in different biological processes including interferon production or autophagy. Plays a role in the activation of RNA virus-induced interferon-beta production by promoting the ubiquitination of TRAF3 and TRAF6. Also plays a role in the early recruitment of autophagy adapters to bacteria. Mediates 'Lys-29' and 'Lys-33'-linked ubiquitination of SQSTM1 leading to xenophagic targeting of bacteria and inhibition of their replication. In Homo sapiens (Human), this protein is E3 ubiquitin-protein ligase RNF166 (RNF166).